A 286-amino-acid polypeptide reads, in one-letter code: Glycine--tRNA ligase alpha subunit (286 aa).

Belongs to the class-II aminoacyl-tRNA synthetase family. Tetramer of two alpha and two beta subunits.

It localises to the cytoplasm. It catalyses the reaction tRNA(Gly) + glycine + ATP = glycyl-tRNA(Gly) + AMP + diphosphate. The polypeptide is Glycine--tRNA ligase alpha subunit (Thermotoga neapolitana (strain ATCC 49049 / DSM 4359 / NBRC 107923 / NS-E)).